Consider the following 266-residue polypeptide: 3-methyl-2-oxobutanoate hydroxymethyltransferase (266 aa).

2 residues coordinate Mg(2+): D45 and D84. 3-methyl-2-oxobutanoate-binding positions include 45–46 (DS), D84, and K113. E115 provides a ligand contact to Mg(2+). The Proton acceptor role is filled by E183.

Belongs to the PanB family. In terms of assembly, homodecamer; pentamer of dimers. Mg(2+) serves as cofactor.

It is found in the cytoplasm. It catalyses the reaction 3-methyl-2-oxobutanoate + (6R)-5,10-methylene-5,6,7,8-tetrahydrofolate + H2O = 2-dehydropantoate + (6S)-5,6,7,8-tetrahydrofolate. It functions in the pathway cofactor biosynthesis; (R)-pantothenate biosynthesis; (R)-pantoate from 3-methyl-2-oxobutanoate: step 1/2. Its function is as follows. Catalyzes the reversible reaction in which hydroxymethyl group from 5,10-methylenetetrahydrofolate is transferred onto alpha-ketoisovalerate to form ketopantoate. The protein is 3-methyl-2-oxobutanoate hydroxymethyltransferase of Coxiella burnetii (strain CbuG_Q212) (Coxiella burnetii (strain Q212)).